Reading from the N-terminus, the 278-residue chain is HTH-type transcriptional activator RhaS (278 aa).

An HTH araC/xylS-type domain is found at 174–272 (NQLMAWLEDH…NWSPRDIRQG (99 aa)). 2 DNA-binding regions (H-T-H motif) span residues 191–212 (EAVA…KQHT) and 239–262 (VTEI…RREF).

Binds DNA as a dimer.

Its subcellular location is the cytoplasm. Its function is as follows. Activates expression of the rhaBAD and rhaT operons. The protein is HTH-type transcriptional activator RhaS of Salmonella arizonae (strain ATCC BAA-731 / CDC346-86 / RSK2980).